We begin with the raw amino-acid sequence, 273 residues long: 2,3,4,5-tetrahydropyridine-2,6-dicarboxylate N-succinyltransferase (273 aa).

R105 and D142 together coordinate substrate.

Belongs to the transferase hexapeptide repeat family. Homotrimer.

The protein resides in the cytoplasm. It carries out the reaction (S)-2,3,4,5-tetrahydrodipicolinate + succinyl-CoA + H2O = (S)-2-succinylamino-6-oxoheptanedioate + CoA. It functions in the pathway amino-acid biosynthesis; L-lysine biosynthesis via DAP pathway; LL-2,6-diaminopimelate from (S)-tetrahydrodipicolinate (succinylase route): step 1/3. This is 2,3,4,5-tetrahydropyridine-2,6-dicarboxylate N-succinyltransferase from Bordetella bronchiseptica (strain ATCC BAA-588 / NCTC 13252 / RB50) (Alcaligenes bronchisepticus).